We begin with the raw amino-acid sequence, 368 residues long: 1-deoxy-D-xylulose 5-phosphate reductoisomerase (368 aa).

Residues Thr-10, Gly-11, Ser-12, Ile-13, Gln-38, and Asn-100 each coordinate NADPH. Residue Lys-101 coordinates 1-deoxy-D-xylulose 5-phosphate. Glu-102 lines the NADPH pocket. Asp-125 is a Mn(2+) binding site. Residues Ser-126, Glu-127, Ser-151, and His-172 each coordinate 1-deoxy-D-xylulose 5-phosphate. Glu-127 is a Mn(2+) binding site. Gly-178 lines the NADPH pocket. Residues Ser-185, Asn-190, Lys-191, and Glu-194 each contribute to the 1-deoxy-D-xylulose 5-phosphate site. Glu-194 contributes to the Mn(2+) binding site.

This sequence belongs to the DXR family. Mg(2+) is required as a cofactor. The cofactor is Mn(2+).

It catalyses the reaction 2-C-methyl-D-erythritol 4-phosphate + NADP(+) = 1-deoxy-D-xylulose 5-phosphate + NADPH + H(+). It functions in the pathway isoprenoid biosynthesis; isopentenyl diphosphate biosynthesis via DXP pathway; isopentenyl diphosphate from 1-deoxy-D-xylulose 5-phosphate: step 1/6. Catalyzes the NADPH-dependent rearrangement and reduction of 1-deoxy-D-xylulose-5-phosphate (DXP) to 2-C-methyl-D-erythritol 4-phosphate (MEP). This Tropheryma whipplei (strain TW08/27) (Whipple's bacillus) protein is 1-deoxy-D-xylulose 5-phosphate reductoisomerase.